A 310-amino-acid polypeptide reads, in one-letter code: Ribosomal RNA small subunit methyltransferase H (310 aa).

S-adenosyl-L-methionine contacts are provided by residues Ala-32–His-34, Asp-51, Phe-84, Asp-102, and Gln-109.

It belongs to the methyltransferase superfamily. RsmH family.

It localises to the cytoplasm. The enzyme catalyses cytidine(1402) in 16S rRNA + S-adenosyl-L-methionine = N(4)-methylcytidine(1402) in 16S rRNA + S-adenosyl-L-homocysteine + H(+). In terms of biological role, specifically methylates the N4 position of cytidine in position 1402 (C1402) of 16S rRNA. The polypeptide is Ribosomal RNA small subunit methyltransferase H (Campylobacter hominis (strain ATCC BAA-381 / DSM 21671 / CCUG 45161 / LMG 19568 / NCTC 13146 / CH001A)).